The chain runs to 388 residues: Protein TsgA homolog (388 aa).

Transmembrane regions (helical) follow at residues 11–31, 50–70, 77–97, 101–121, 133–153, 160–180, 206–226, 244–264, 268–288, 298–318, 332–352, and 360–380; these read WISF…GMIM, TFLN…IEII, IFSF…NSIF, INMF…TFII, LLLL…IVTA, IIWY…FLLT, VFLL…FISW, SLVS…SFII, NLYR…YCFI, YIII…ITLA, LILL…SPIV, and TLIS…LIYF.

This sequence belongs to the major facilitator superfamily. TsgA family.

It is found in the cell membrane. The sequence is that of Protein TsgA homolog from Buchnera aphidicola subsp. Acyrthosiphon pisum (strain Tuc7).